The primary structure comprises 102 residues: Small ribosomal subunit protein uS10 (102 aa).

This sequence belongs to the universal ribosomal protein uS10 family. Part of the 30S ribosomal subunit.

In terms of biological role, involved in the binding of tRNA to the ribosomes. This Nitrosopumilus maritimus (strain SCM1) protein is Small ribosomal subunit protein uS10.